A 232-amino-acid polypeptide reads, in one-letter code: Histone H1B (232 aa).

A compositionally biased stretch (low complexity) spans Met1 to Ala18. 2 disordered regions span residues Met1 to Ser44 and Gln99 to Ala232. In terms of domain architecture, H15 spans Thr39–Ala113. 5 stretches are compositionally biased toward basic residues: residues Lys132–Lys141, Lys147–Lys173, Ala181–Ala197, Lys205–Lys214, and Lys222–Ala232.

The protein belongs to the histone H1/H5 family.

It localises to the nucleus. The protein resides in the chromosome. Histones H1 are necessary for the condensation of nucleosome chains into higher-order structures. The protein is Histone H1B of Chironomus tentans (Midge).